A 371-amino-acid polypeptide reads, in one-letter code: Cytochrome b (371 aa).

4 helical membrane-spanning segments follow: residues 25–45, 69–90, 105–125, and 170–190; these read FGSM…FLAV, WMMQ…YTHI, WLSG…GYVL, and FFAL…LHIM. Positions 75 and 89 each coordinate heme b. Heme b contacts are provided by His-174 and His-188. Residue His-193 coordinates a ubiquinone. Transmembrane regions (helical) follow at residues 218-238, 280-300, 312-332, and 339-358; these read YKDM…VAFF, LGGA…PFTH, IMQL…WAAT, and FTTI…ITNP.

Belongs to the cytochrome b family. As to quaternary structure, the cytochrome bc1 complex contains 3 respiratory subunits (MT-CYB, CYC1 and UQCRFS1), 2 core proteins (UQCRC1 and UQCRC2) and probably 6 low-molecular weight proteins. Heme b is required as a cofactor.

The protein resides in the mitochondrion inner membrane. Its function is as follows. Component of the ubiquinol-cytochrome c reductase complex (complex III or cytochrome b-c1 complex) that is part of the mitochondrial respiratory chain. The b-c1 complex mediates electron transfer from ubiquinol to cytochrome c. Contributes to the generation of a proton gradient across the mitochondrial membrane that is then used for ATP synthesis. This Eryx colubrinus colubrinus protein is Cytochrome b (MT-CYB).